Consider the following 120-residue polypeptide: U13-lycotoxin-Ls1e (120 aa).

Residues methionine 1 to cysteine 16 form the signal peptide. Residues phenylalanine 17–arginine 54 constitute a propeptide that is removed on maturation. 4 disulfides stabilise this stretch: cysteine 56/cysteine 70, cysteine 63/cysteine 76, cysteine 69/cysteine 87, and cysteine 78/cysteine 85. Residues cysteine 56 to cysteine 95 form the Agouti domain.

Belongs to the neurotoxin 05 (agouti) family. In terms of processing, contains 6 disulfide bonds. Expressed by the venom gland.

It is found in the secreted. The protein is U13-lycotoxin-Ls1e of Lycosa singoriensis (Wolf spider).